Consider the following 385-residue polypeptide: MQACGGGAAGRRAFDSICPNRMLALPGRALLCKPGKPERKFAPPRKFFPGCTGGSPVSVYEDPPDAEPTALPALTTIDLQDLADCSSLLGSDAPPGGDLAASQNHSHQTEADFNLQDFRDTVDDLISDSSSMMSPTLASGDFPFSPCDISPFGPCLSPPLDPRALQSPPLRPPDVPPPEQYWKEVADQNQRALGDALVENNQLHVTLTQKQEEIASLKERNVQLKELASRTRHLASVLDKLMITQSRDCGAAAEPFLLKAKAKRSLEELVSAAGQDCAEVDAILREISERCDEALQSRDPKRPRLLPEPANTDTRPGNLHGAFRGLRTDCSRSALNLSHSELEEGGSFSTRIRSHSTIRTLAFPQGNAFTIRTANGGYKFRWVPS.

The necessary and sufficient for its degradation during the cell cycle stretch occupies residues 1 to 130; it reads MQACGGGAAG…TVDDLISDSS (130 aa). The interval 86–111 is disordered; the sequence is SSLLGSDAPPGGDLAASQNHSHQTEA. The necessary and sufficient for proper nuclear localization stretch occupies residues 131-385; the sequence is SMMSPTLASG…GGYKFRWVPS (255 aa). The interval 173–245 is necessary and sufficient for interaction with GMNN and sufficient for homodimerization; it reads PDVPPPEQYW…SVLDKLMITQ (73 aa). Residues 179–227 adopt a coiled-coil conformation; that stretch reads EQYWKEVADQNQRALGDALVENNQLHVTLTQKQEEIASLKERNVQLKEL. Positions 294–319 are disordered; the sequence is ALQSRDPKRPRLLPEPANTDTRPGNL.

It belongs to the geminin family. In terms of assembly, heterodimer (via coiled-coil domain) with GMNN (via coiled-coil domain); targets GMNN to the nucleus. Can form homodimers (in vitro, via coiled-coil domain), but these are much less stable than the heterodimer formed with GMNN.

The protein localises to the nucleus. Functionally, transcription regulator specifically required for multiciliate cell differentiation. Acts in a multiprotein complex containing E2F4 and E2F5 that binds and activates genes required for centriole biogenesis. Required for the deuterosome-mediated acentriolar pathway. Plays a role in mitotic cell cycle progression by promoting cell cycle exit. Modulates GMNN activity by reducing its affinity for CDT1. In Homo sapiens (Human), this protein is Multicilin.